The chain runs to 388 residues: Pepsin A-5 (388 aa).

An N-terminal signal peptide occupies residues 1-15 (MKWLLLLGLVALSEC). Positions 16–62 (IMYKVPLIRKKSLRRTLSERGLLKDFLKKHNLNPARKYFPQWEAPTL) are cleaved as a propeptide — activation peptide. Positions 76–385 (YFGTIGIGTP…DRANNQVGLA (310 aa)) constitute a Peptidase A1 domain. Residue D94 is part of the active site. Residues C107 and C112 are joined by a disulfide bond. S130 bears the Phosphoserine mark. A disulfide bridge links C268 with C272. Residue D277 is part of the active site. C311 and C344 are joined by a disulfide.

It belongs to the peptidase A1 family.

It is found in the secreted. It catalyses the reaction Preferential cleavage: hydrophobic, preferably aromatic, residues in P1 and P1' positions. Cleaves 1-Phe-|-Val-2, 4-Gln-|-His-5, 13-Glu-|-Ala-14, 14-Ala-|-Leu-15, 15-Leu-|-Tyr-16, 16-Tyr-|-Leu-17, 23-Gly-|-Phe-24, 24-Phe-|-Phe-25 and 25-Phe-|-Tyr-26 bonds in the B chain of insulin.. Shows particularly broad specificity; although bonds involving phenylalanine and leucine are preferred, many others are also cleaved to some extent. This is Pepsin A-5 (PGA5) from Homo sapiens (Human).